The following is a 301-amino-acid chain: Acetylglutamate kinase (301 aa).

Residues Gly72 to Gly73, Arg94, and Asn199 each bind substrate.

Belongs to the acetylglutamate kinase family. ArgB subfamily.

Its subcellular location is the cytoplasm. It carries out the reaction N-acetyl-L-glutamate + ATP = N-acetyl-L-glutamyl 5-phosphate + ADP. It participates in amino-acid biosynthesis; L-arginine biosynthesis; N(2)-acetyl-L-ornithine from L-glutamate: step 2/4. Catalyzes the ATP-dependent phosphorylation of N-acetyl-L-glutamate. This Bartonella bacilliformis (strain ATCC 35685 / KC583 / Herrer 020/F12,63) protein is Acetylglutamate kinase.